A 102-amino-acid polypeptide reads, in one-letter code: Integration host factor subunit beta (102 aa).

Belongs to the bacterial histone-like protein family. In terms of assembly, heterodimer of an alpha and a beta chain.

In terms of biological role, this protein is one of the two subunits of integration host factor, a specific DNA-binding protein that functions in genetic recombination as well as in transcriptional and translational control. The polypeptide is Integration host factor subunit beta (ihfB) (Rhizobium radiobacter (Agrobacterium tumefaciens)).